We begin with the raw amino-acid sequence, 816 residues long: Transducer protein Htr18 (816 aa).

A run of 2 helical transmembrane segments spans residues 21–41 and 282–302; these read VVIV…TQAV and NIVV…LVIG. Residues 303–356 enclose the HAMP 1 domain; that stretch reads RDALTALTDMSDRAEAIAAGDIDTAIEETTRIDEVGDLRRSFRDIQEYLQTVAG. The segment at 399 to 425 is disordered; that stretch reads DAQETAEQSRKEAEQSREEAEALAAAL. Residues 405–418 show a composition bias toward basic and acidic residues; that stretch reads EQSRKEAEQSREEA. The region spanning 423–476 is the HAMP 2 domain; it reads AALESQAQDIRETVEHAADGDLTQRLETDTDHESMAAIATALNSLLEELEGTIH. Residues 495–731 form the Methyl-accepting transducer domain; sequence SAEEVKRASG…EVVTMVDEVG (237 aa). The disordered stretch occupies residues 790 to 816; sequence GGAENTTGAFVRSASTDHSRDATHHDT. Positions 793 to 803 are enriched in polar residues; it reads ENTTGAFVRSA. The span at 804–816 shows a compositional bias: basic and acidic residues; the sequence is STDHSRDATHHDT.

It belongs to the methyl-accepting chemotaxis (MCP) protein family. Post-translationally, methylated by CheR.

It localises to the cell membrane. Its function is as follows. Potentially involved in chemo- or phototactic signal transduction. This Halobacterium salinarum (strain ATCC 29341 / DSM 671 / R1) protein is Transducer protein Htr18 (htr18).